Here is a 227-residue protein sequence, read N- to C-terminus: Ribosomal RNA small subunit methyltransferase G (227 aa).

Residues Gly69, Phe74, 119–120, and Arg134 each bind S-adenosyl-L-methionine; that span reads VE.

The protein belongs to the methyltransferase superfamily. RNA methyltransferase RsmG family.

It is found in the cytoplasm. Functionally, specifically methylates the N7 position of a guanine in 16S rRNA. In Mycoplasmopsis pulmonis (strain UAB CTIP) (Mycoplasma pulmonis), this protein is Ribosomal RNA small subunit methyltransferase G.